A 458-amino-acid polypeptide reads, in one-letter code: Protein amnionless (458 aa).

A signal peptide spans 1-19 (MGALGRVLLWLQLCAMTRA). Residues 20–362 (AYKLWVPNTS…ELNQSSSGAG (343 aa)) lie on the Extracellular side of the membrane. Asn27 is a glycosylation site (N-linked (GlcNAc...) asparagine). 6 disulfide bridges follow: Cys43–Cys96, Cys137–Cys213, Cys205–Cys211, Cys223–Cys249, Cys234–Cys250, and Cys239–Cys253. The tract at residues 67–87 (SDMLLPLDGELVLASGAALSA) is interaction with CUBN. A VWFC domain is found at 203–254 (QACTDASGCVCGNAEMLPWICASLLQPLGGRCPQAACQDPLLPQGQCCDLCG). N-linked (GlcNAc...) asparagine glycosylation occurs at Asn355. The helical transmembrane segment at 363 to 383 (LAGGVAALVLLALLGTVLLLL) threads the bilayer. Residues 384–458 (HRSGRLRWRR…LFAGEAEAEA (75 aa)) lie on the Cytoplasmic side of the membrane.

In terms of assembly, interacts (via extracellular region) with CUBN/cubilin. This gives rise to a huge complex containing one AMN chain and three CUBN chains. N-glycosylated. Post-translationally, a soluble form arises by proteolytic removal of the membrane anchor. Expressed in polarized epithelial cells which are specialized in resorption or transport, specifically kidney proximal tubules and intestinal epithelium.

It is found in the apical cell membrane. It localises to the cell membrane. The protein resides in the endosome membrane. Its subcellular location is the membrane. The protein localises to the coated pit. Membrane-bound component of the endocytic receptor formed by AMN and CUBN. Required for normal CUBN glycosylation and trafficking to the cell surface. The complex formed by AMN and CUBN is required for efficient absorption of vitamin B12. Required for normal CUBN-mediated protein transport in the kidney. The polypeptide is Protein amnionless (Amn) (Mus musculus (Mouse)).